A 133-amino-acid chain; its full sequence is ATP synthase epsilon chain, chloroplastic (133 aa).

Belongs to the ATPase epsilon chain family. F-type ATPases have 2 components, CF(1) - the catalytic core - and CF(0) - the membrane proton channel. CF(1) has five subunits: alpha(3), beta(3), gamma(1), delta(1), epsilon(1). CF(0) has three main subunits: a, b and c.

It localises to the plastid. Its subcellular location is the chloroplast thylakoid membrane. Produces ATP from ADP in the presence of a proton gradient across the membrane. The polypeptide is ATP synthase epsilon chain, chloroplastic (Chara vulgaris (Common stonewort)).